Here is a 660-residue protein sequence, read N- to C-terminus: Pseudouridylate synthase 7 homolog (660 aa).

Positions 1 to 99 (MEMTSTSLKR…EAGEEEEAES (99 aa)) are disordered. A Phosphoserine modification is found at Ser7. Positions 22-32 (TPHDETKKQKV) are enriched in basic and acidic residues. A compositionally biased stretch (acidic residues) spans 76-99 (QEEEEEEEEEDGLSEAGEEEEAES). Residue Ser126 is modified to Phosphoserine. Asp293 serves as the catalytic Nucleophile. In terms of domain architecture, TRUD spans 369-579 (GFINYYGMQR…SGAYRRIIIR (211 aa)).

It belongs to the pseudouridine synthase TruD family. In terms of assembly, interacts with SIRT1.

It localises to the nucleus. The enzyme catalyses a uridine in tRNA = a pseudouridine in tRNA. It carries out the reaction uridine(13) in tRNA = pseudouridine(13) in tRNA. The catalysed reaction is a uridine in mRNA = a pseudouridine in mRNA. Its function is as follows. Pseudouridylate synthase that catalyzes pseudouridylation of RNAs. Acts as a regulator of protein synthesis in embryonic stem cells by mediating pseudouridylation of RNA fragments derived from tRNAs (tRFs): pseudouridylated tRFs inhibit translation by targeting the translation initiation complex. Also catalyzes pseudouridylation of mRNAs: mediates pseudouridylation of mRNAs with the consensus sequence 5'-UGUAG-3'. Acts as a regulator of pre-mRNA splicing by mediating pseudouridylation of pre-mRNAs at locations associated with alternatively spliced regions. Pseudouridylation of pre-mRNAs near splice sites directly regulates mRNA splicing and mRNA 3'-end processing. In addition to mRNAs and tRNAs, binds other types of RNAs, such as snRNAs, Y RNAs and vault RNAs, suggesting that it can catalyze pseudouridylation of many RNA types. The protein is Pseudouridylate synthase 7 homolog of Mus musculus (Mouse).